The chain runs to 307 residues: Aspartate carbamoyltransferase catalytic subunit (307 aa).

Residues arginine 49 and threonine 50 each coordinate carbamoyl phosphate. Lysine 77 is an L-aspartate binding site. Carbamoyl phosphate is bound by residues arginine 99, histidine 127, and glutamine 130. L-aspartate contacts are provided by arginine 160 and arginine 211. Alanine 250 and proline 251 together coordinate carbamoyl phosphate.

It belongs to the aspartate/ornithine carbamoyltransferase superfamily. ATCase family. Heterododecamer (2C3:3R2) of six catalytic PyrB chains organized as two trimers (C3), and six regulatory PyrI chains organized as three dimers (R2).

The catalysed reaction is carbamoyl phosphate + L-aspartate = N-carbamoyl-L-aspartate + phosphate + H(+). Its pathway is pyrimidine metabolism; UMP biosynthesis via de novo pathway; (S)-dihydroorotate from bicarbonate: step 2/3. Functionally, catalyzes the condensation of carbamoyl phosphate and aspartate to form carbamoyl aspartate and inorganic phosphate, the committed step in the de novo pyrimidine nucleotide biosynthesis pathway. The polypeptide is Aspartate carbamoyltransferase catalytic subunit (Bacillus pumilus (strain SAFR-032)).